A 313-amino-acid chain; its full sequence is Putative S-adenosyl-L-methionine-dependent methyltransferase MUL_0706 (313 aa).

Residues aspartate 132 and aspartate 161–leucine 162 contribute to the S-adenosyl-L-methionine site.

It belongs to the UPF0677 family.

Exhibits S-adenosyl-L-methionine-dependent methyltransferase activity. This is Putative S-adenosyl-L-methionine-dependent methyltransferase MUL_0706 from Mycobacterium ulcerans (strain Agy99).